Here is a 474-residue protein sequence, read N- to C-terminus: MTKKLHIKTWGCQMNEYDSSKMADLLDATHGYQLTDVAEEADVLLLNTCSIREKAQEKVFHQLGRWKLLKEKNPDLIIGVGGCVASQEGEHIRQRAHYVDIIFGPQTLHRLPEMINSVRGDRSPVVDISFPEIEKFDRLPEPRAEGPTAFVSIMEGCNKYCTYCVVPYTRGEEVSRPSDDILFEIAQLAAQGVREVNLLGQNVNAWRGENYDGSTGSFADLLRLVAAIDGIDRIRFTTSHPIEFTDDIIEVYRDTPELVSFLHLPVQSGSDRILNLMGRTHTALEYKAIIRKLRAARPDIQISSDFIVGFPGETTEDFEKTMKLIADVNFDMSYSFIFSARPGTPAADMVDDVPEEEKKQRLYILQERINQQAMAWSRRMLGTTQRILVEGTSRKSIMELSGRTENNRVVNFEGTPDMIGKFVDVEITDVYPNSLRGKVVRTEDEMGLRVAETPESVIARTRKENDLGVGYYQP.

An MTTase N-terminal domain is found at 3-120; the sequence is KKLHIKTWGC…LPEMINSVRG (118 aa). Cys-12, Cys-49, Cys-83, Cys-157, Cys-161, and Cys-164 together coordinate [4Fe-4S] cluster. One can recognise a Radical SAM core domain in the interval 143–375; that stretch reads RAEGPTAFVS…QERINQQAMA (233 aa). The TRAM domain maps to 378-441; sequence RRMLGTTQRI…PNSLRGKVVR (64 aa).

Belongs to the methylthiotransferase family. MiaB subfamily. In terms of assembly, monomer. Requires [4Fe-4S] cluster as cofactor.

The protein localises to the cytoplasm. It carries out the reaction N(6)-dimethylallyladenosine(37) in tRNA + (sulfur carrier)-SH + AH2 + 2 S-adenosyl-L-methionine = 2-methylsulfanyl-N(6)-dimethylallyladenosine(37) in tRNA + (sulfur carrier)-H + 5'-deoxyadenosine + L-methionine + A + S-adenosyl-L-homocysteine + 2 H(+). Functionally, catalyzes the methylthiolation of N6-(dimethylallyl)adenosine (i(6)A), leading to the formation of 2-methylthio-N6-(dimethylallyl)adenosine (ms(2)i(6)A) at position 37 in tRNAs that read codons beginning with uridine. The polypeptide is tRNA-2-methylthio-N(6)-dimethylallyladenosine synthase (Shigella boydii serotype 4 (strain Sb227)).